Here is a 941-residue protein sequence, read N- to C-terminus: Cilia- and flagella-associated protein 69 (941 aa).

Low complexity predominate over residues 1–14; it reads MWTEEAGATAEAQE. Residues 1 to 26 are disordered; that stretch reads MWTEEAGATAEAQESGIRNKSSSSSQ. Residues 16–26 show a composition bias toward polar residues; sequence GIRNKSSSSSQ.

Highly expressed in the testis, specifically in sperm (at protein level). Expressed in the brain, kidney, liver, lung, and intestine.

It is found in the cell projection. It localises to the cilium. The protein localises to the flagellum. In terms of biological role, cilium- and flagellum-associated protein. In the olfactory epithelium, regulates the speed of activation and termination of the odor response and thus contributes to the robustness of olfactory transduction pathways. Required for sperm flagellum assembly and stability. In Homo sapiens (Human), this protein is Cilia- and flagella-associated protein 69.